A 484-amino-acid chain; its full sequence is SPI-2 type 3 secretion system translocon protein SctE (484 aa).

The next 2 membrane-spanning stretches (helical) occupy residues 85–105 (FLQT…LNVF) and 152–172 (GIFG…IGAL). 2 coiled-coil regions span residues 107–152 (NNAQ…RKAG) and 413–457 (NTEK…LYKG).

Belongs to the SctE/SipB/YopB family. The core secretion machinery of the T3SS is composed of approximately 20 different proteins, including cytoplasmic components, a base, an export apparatus and a needle. This subunit is involved in the formation of a pore, called the translocon, in host membrane. May form a complex with SseB and SseD/SctB2. SseB is required for correct localization of SseC/SctE2 on the bacterial cell surface.

It is found in the secreted. It localises to the cell surface. Its subcellular location is the host membrane. Component of the type III secretion system 2 (SPI-2 T3SS), also called injectisome, which is used to inject bacterial effector proteins into eukaryotic host cells. SseC/SctE2 and SseD/SctB2 are inserted into the host membrane where they form a pore and allow the translocation of effector proteins into the cytosol of target cells. Its function is as follows. Required for the translocation of SPI-2 effector proteins. Required for systemic Salmonella infection of the mouse. Essential for SpvB-induced actin depolymerization in the host cell cytoplasm. The protein is SPI-2 type 3 secretion system translocon protein SctE of Salmonella typhimurium (strain LT2 / SGSC1412 / ATCC 700720).